A 1190-amino-acid polypeptide reads, in one-letter code: MPVRGDRGFPPRRELSGWLRAPGMEELIWEQYTVTLQKDSKRGFGIAVSGGRDNPHFENGETSIVISDVLPGGPADGLLQENDRVVMVNGTPMEDVLHSFAVQQLRKSGKVAAIVVKRPRKVQVAALQASPPLDQDDRAFEVMDEFDGRSFRSGYSERSRLNSHGGRSRSWEDSPERGRPHERARSRERDLSRDRSRGRSLERGLDQDHARTRDRSRGRSLERGLDHDFGPSRDRDRDRSRGRSIDQDYERAYHRAYDPDYERAYSPEYRRGARHDARSRGPRSRSREHPHSRSPSPEPRGRPGPIGVLLMKSRANEEYGLRLGSQIFVKEMTRTGLATKDGNLHEGDIILKINGTVTENMSLTDARKLIEKSRGKLQLVVLRDSQQTLINIPSLNDSDSEIEDISEIESNRSFSPEERRHQYSDYDYHSSSEKLKERPSSREDTPSRLSRMGATPTPFKSTGDIAGTVVPETNKEPRYQEDPPAPQPKAAPRTFLRPSPEDEAIYGPNTKMVRFKKGDSVGLRLAGGNDVGIFVAGIQEGTSAEQEGLQEGDQILKVNTQDFRGLVREDAVLYLLEIPKGEMVTILAQSRADVYRDILACGRGDSFFIRSHFECEKETPQSLAFTRGEVFRVVDTLYDGKLGNWLAVRIGNELEKGLIPNKSRAEQMASVQNAQRDNAGDRADFWRMRGQRSGVKKNLRKSREDLTAVVSVSTKFPAYERVLLREAGFKRPVVLFGPIADIAMEKLANELPDWFQTAKTEPKDAGSEKSTGVVRLNTVRQIIEQDKHALLDVTPKAVDLLNYTQWFPIVIFFNPDSRQGVKTMRQRLNPTSNKSSRKLFDQANKLKKTCAHLFTATINLNSANDSWFGSLKDTIQHQQGEAVWVSEGKMEGMDDDPEDRMSYLTAMGADYLSCDSRLISDFEDTDGEGGAYTDNELDEPAEEPLVSSITRSSEPVQHEESIRKPSPEPRAQMRRAASSDQLRDNSPPPAFKPEPPKAKTQNKEESYDFSKSYEYKSNPSAVAGNETPGASTKGYPPPVAAKPTFGRSILKPSTPIPPQEGEEVGESSEEQDNAPKSVLGKVKIFEKMDHKARLQRMQELQEAQNARIEIAQKHPDIYAVPIKTHKPDPGTPQHTSSRPPEPQKAPSRPYQDTRGSYGSDAEEEEYRQQLSEHSKRGYYGQSARYRDTEL.

Serine 16 bears the Phosphoserine mark. The PDZ 1 domain occupies 33–120 (TVTLQKDSKR…VAAIVVKRPR (88 aa)). Serine 130, serine 150, serine 153, serine 163, serine 168, serine 170, serine 174, serine 200, serine 220, serine 232, serine 244, serine 266, serine 325, serine 398, serine 400, serine 406, serine 415, serine 424, serine 430, and serine 431 each carry phosphoserine. Residues 152-306 (RSGYSERSRL…PEPRGRPGPI (155 aa)) are disordered. Basic and acidic residues predominate over residues 169-291 (RSWEDSPERG…PRSRSREHPH (123 aa)). The region spanning 307 to 385 (GVLLMKSRAN…KLQLVVLRDS (79 aa)) is the PDZ 2 domain. A disordered region spans residues 408-506 (IESNRSFSPE…RPSPEDEAIY (99 aa)). Residues 415–446 (SPEERRHQYSDYDYHSSSEKLKERPSSREDTP) show a composition bias toward basic and acidic residues. Position 455 is a phosphothreonine (threonine 455). At serine 499 the chain carries Phosphoserine. The 82-residue stretch at 509 to 590 (NTKMVRFKKG…GEMVTILAQS (82 aa)) folds into the PDZ 3 domain. At tyrosine 574 the chain carries Phosphotyrosine. The 66-residue stretch at 604 to 669 (GDSFFIRSHF…PNKSRAEQMA (66 aa)) folds into the SH3 domain. Residues 678–876 (NAGDRADFWR…WFGSLKDTIQ (199 aa)) enclose the Guanylate kinase-like domain. Residues serine 702 and serine 902 each carry the phosphoserine modification. Residue threonine 905 is modified to Phosphothreonine. Residues serine 913 and serine 920 each carry the phosphoserine modification. 2 disordered regions span residues 920 to 1079 (SDFE…KSVL) and 1105 to 1190 (NARI…DTEL). Phosphothreonine occurs at positions 925 and 933. Residues 956–967 (VQHEESIRKPSP) are compositionally biased toward basic and acidic residues. Serine 966, serine 978, serine 986, serine 1006, serine 1067, and serine 1068 each carry phosphoserine. Positions 994–1014 (EPPKAKTQNKEESYDFSKSYE) are enriched in basic and acidic residues. The segment covering 1060–1072 (EGEEVGESSEEQD) has biased composition (acidic residues). Tyrosine 1118 carries the post-translational modification Phosphotyrosine. Threonine 1131 is modified (phosphothreonine). Phosphoserine is present on residues serine 1147 and serine 1159. The segment covering 1166 to 1175 (YRQQLSEHSK) has biased composition (basic and acidic residues). The tract at residues 1188–1190 (TEL) is interaction with SCRIB.

Belongs to the MAGUK family. As to quaternary structure, homodimer. Interacts (via PDZ2 domain) with TJP1/ZO1 (via PDZ2 domain). Interacts with OCLN. Interacts with UBN1. Interacts with SAFB in the nucleus. Interacts with SCRIB. Interacts with USP53 (via the C-terminal region). Interacts with claudins, including CLDN1, CLDN2, CLDN3, CLDN5 and CLDN7. Interacts with CLDN18. Interacts (via N-terminus) with CTNNA1. In terms of tissue distribution, this protein is found in epithelial cell junctions. Isoform A1 is abundant in the heart and brain. Detected in brain and skeletal muscle. It is present almost exclusively in normal tissues. Isoform C1 is expressed at high level in the kidney, pancreas, heart and placenta. Not detected in brain and skeletal muscle. Found in normal as well as in most neoplastic tissues.

It localises to the cell junction. The protein localises to the adherens junction. Its subcellular location is the cell membrane. It is found in the tight junction. The protein resides in the nucleus. In terms of biological role, plays a role in tight junctions and adherens junctions. Acts as a positive regulator of RANKL-induced osteoclast differentiation, potentially via mediating downstream transcriptional activity. This chain is Tight junction protein 2, found in Homo sapiens (Human).